The primary structure comprises 112 residues: Ribosome-binding factor A (112 aa).

This sequence belongs to the RbfA family. In terms of assembly, monomer. Binds 30S ribosomal subunits, but not 50S ribosomal subunits or 70S ribosomes.

The protein resides in the cytoplasm. One of several proteins that assist in the late maturation steps of the functional core of the 30S ribosomal subunit. Associates with free 30S ribosomal subunits (but not with 30S subunits that are part of 70S ribosomes or polysomes). Required for efficient processing of 16S rRNA. May interact with the 5'-terminal helix region of 16S rRNA. In Mycoplasmopsis pulmonis (strain UAB CTIP) (Mycoplasma pulmonis), this protein is Ribosome-binding factor A.